Here is a 468-residue protein sequence, read N- to C-terminus: 3-isopropylmalate dehydratase large subunit (468 aa).

[4Fe-4S] cluster is bound by residues Cys-349, Cys-409, and Cys-412.

It belongs to the aconitase/IPM isomerase family. LeuC type 1 subfamily. Heterodimer of LeuC and LeuD. It depends on [4Fe-4S] cluster as a cofactor.

The catalysed reaction is (2R,3S)-3-isopropylmalate = (2S)-2-isopropylmalate. Its pathway is amino-acid biosynthesis; L-leucine biosynthesis; L-leucine from 3-methyl-2-oxobutanoate: step 2/4. Catalyzes the isomerization between 2-isopropylmalate and 3-isopropylmalate, via the formation of 2-isopropylmaleate. The sequence is that of 3-isopropylmalate dehydratase large subunit from Nitrobacter hamburgensis (strain DSM 10229 / NCIMB 13809 / X14).